A 513-amino-acid chain; its full sequence is Putative zinc finger CCCH domain-containing protein 51 (513 aa).

The tract at residues 155–180 is disordered; sequence SMPRNSPNAGRNLVGHPHSSSKSSSK. Residues 170-180 are compositionally biased toward low complexity; sequence HPHSSSKSSSK. Residues 176–204 form a C3H1-type zinc finger; sequence KSSSKPCHFHFFRGYCKKGVNCQFFHGSV. One can recognise an HTH OST-type domain in the interval 218–299; the sequence is SLSKLDMEIR…HGQYHVVLVE (82 aa). Positions 325–411 constitute an RRM domain; it reads NQIYMTFPVH…SELRMTWLKS (87 aa).

The chain is Putative zinc finger CCCH domain-containing protein 51 from Oryza sativa subsp. japonica (Rice).